We begin with the raw amino-acid sequence, 178 residues long: Fucolectin-1 (178 aa).

The N-terminal stretch at 1–20 (MKVKTIMLLFQILAISTIKS) is a signal peptide. Residues 29–178 (QENVAVRGKA…VEVNALLPVN (150 aa)) are F5/8 type C-like. Residues aspartate 59, asparagine 61, and serine 70 each coordinate Ca(2+). 3 cysteine pairs are disulfide-bonded: cysteine 71–cysteine 167, cysteine 103–cysteine 104, and cysteine 129–cysteine 145. Positions 73 and 100 each coordinate alpha-L-fucose. The Cell attachment site signature appears at 100 to 102 (RGD). Residue arginine 107 coordinates alpha-L-fucose. 2 residues coordinate Ca(2+): cysteine 167 and glutamate 168.

It belongs to the fucolectin family. In terms of assembly, homotrimer. In terms of tissue distribution, parenchymal hepatocytes.

The protein resides in the secreted. It localises to the extracellular space. In terms of biological role, acts as a defensive agent. Recognizes blood group fucosylated oligosaccharides including A, B, H and Lewis B-type antigens. Does not recognize Lewis A antigen and has low affinity for monovalent haptens. The protein is Fucolectin-1 of Anguilla japonica (Japanese eel).